A 103-amino-acid polypeptide reads, in one-letter code: Acyl-CoA-binding protein (103 aa).

The ACB domain maps to 18-103 (HQADFDEAAE…AKTMVEKYGI (86 aa)). An acyl-CoA is bound by residues Lys-30, 45-49 (YGFYK), Lys-67, Lys-71, and Tyr-90.

Belongs to the ACBP family. In terms of assembly, monomer.

The protein localises to the endoplasmic reticulum. It is found in the golgi apparatus. Its function is as follows. Binds medium- and long-chain acyl-CoA esters with very high affinity and may function as an intracellular carrier of acyl-CoA esters. It is also able to displace diazepam from the benzodiazepine (BZD) recognition site located on the GABA type A receptor. It is therefore possible that this protein also acts as a neuropeptide to modulate the action of the GABA receptor. This chain is Acyl-CoA-binding protein (DBI), found in Anas platyrhynchos (Mallard).